The following is a 356-amino-acid chain: S-adenosylmethionine:tRNA ribosyltransferase-isomerase (356 aa).

The protein belongs to the QueA family. As to quaternary structure, monomer.

Its subcellular location is the cytoplasm. It carries out the reaction 7-aminomethyl-7-carbaguanosine(34) in tRNA + S-adenosyl-L-methionine = epoxyqueuosine(34) in tRNA + adenine + L-methionine + 2 H(+). Its pathway is tRNA modification; tRNA-queuosine biosynthesis. Transfers and isomerizes the ribose moiety from AdoMet to the 7-aminomethyl group of 7-deazaguanine (preQ1-tRNA) to give epoxyqueuosine (oQ-tRNA). In Citrobacter koseri (strain ATCC BAA-895 / CDC 4225-83 / SGSC4696), this protein is S-adenosylmethionine:tRNA ribosyltransferase-isomerase.